The chain runs to 290 residues: Ig delta chain C region membrane-bound form (290 aa).

Residues 5–105 (PDMFLLSECK…WDSQSSKRVT (101 aa)) enclose the Ig-like 1 domain. Cys-26 and Cys-78 are disulfide-bonded. 2 N-linked (GlcNAc...) asparagine glycosylation sites follow: Asn-58 and Asn-75. A disordered region spans residues 89–111 (PFKFPESWDSQSSKRVTPTLQAK). Positions 96 to 111 (WDSQSSKRVTPTLQAK) are enriched in polar residues. 3 N-linked (GlcNAc...) asparagine glycosylation sites follow: Asn-112, Asn-135, and Asn-227. An Ig-like 2 domain is found at 133–233 (PSNLTVNILT…TKLNASKSLA (101 aa)). Residues 262-279 (GLWPTMCTFVALFLLTLL) form a helical membrane-spanning segment. The Cytoplasmic portion of the chain corresponds to 280 to 290 (YSGFVTFIKVK).

Cell lines producing IgD contain several mRNA species for Ig delta chains. In plasmacytomas, the secreted form is the major component, and the membrane-bound form is a minor component. In spleen, however, the membrane-bound form is the major component. These two forms differ in their C-terminal segments.

Its subcellular location is the cell membrane. This Mus musculus (Mouse) protein is Ig delta chain C region membrane-bound form.